The primary structure comprises 362 residues: 3-dehydroquinate synthase (362 aa).

NAD(+) contacts are provided by residues 71–76 (DGEQYK), 105–109 (GVVGD), 129–130 (TT), Lys-142, Lys-151, and 169–172 (CLKT). Zn(2+) is bound by residues Glu-184, His-247, and His-264.

This sequence belongs to the sugar phosphate cyclases superfamily. Dehydroquinate synthase family. Requires NAD(+) as cofactor. It depends on Co(2+) as a cofactor. Zn(2+) serves as cofactor.

Its subcellular location is the cytoplasm. It carries out the reaction 7-phospho-2-dehydro-3-deoxy-D-arabino-heptonate = 3-dehydroquinate + phosphate. It functions in the pathway metabolic intermediate biosynthesis; chorismate biosynthesis; chorismate from D-erythrose 4-phosphate and phosphoenolpyruvate: step 2/7. Its function is as follows. Catalyzes the conversion of 3-deoxy-D-arabino-heptulosonate 7-phosphate (DAHP) to dehydroquinate (DHQ). The polypeptide is 3-dehydroquinate synthase (Shigella flexneri).